A 380-amino-acid chain; its full sequence is Glucose-1-phosphate adenylyltransferase (380 aa).

Residues tyrosine 100, glycine 165, 180 to 181 (EK), and serine 191 each bind alpha-D-glucose 1-phosphate.

This sequence belongs to the bacterial/plant glucose-1-phosphate adenylyltransferase family. As to quaternary structure, homotetramer.

It catalyses the reaction alpha-D-glucose 1-phosphate + ATP + H(+) = ADP-alpha-D-glucose + diphosphate. Its pathway is glycan biosynthesis; glycogen biosynthesis. Its function is as follows. Involved in the biosynthesis of ADP-glucose, a building block required for the elongation reactions to produce glycogen. Catalyzes the reaction between ATP and alpha-D-glucose 1-phosphate (G1P) to produce pyrophosphate and ADP-Glc. This is Glucose-1-phosphate adenylyltransferase from Clostridium acetobutylicum (strain ATCC 824 / DSM 792 / JCM 1419 / IAM 19013 / LMG 5710 / NBRC 13948 / NRRL B-527 / VKM B-1787 / 2291 / W).